The sequence spans 623 residues: Myosin light chain kinase 2, skeletal/cardiac muscle (623 aa).

Disordered regions lie at residues 1 to 179 and 204 to 251; these read MATE…PSCP and GVPV…QGDT. An N-acetylalanine modification is found at Ala2. Residues 20–31 are compositionally biased toward low complexity; it reads APKAAAGEGPPA. Basic and acidic residues-rich tracts occupy residues 32–43 and 49–89; these read AEKDPGPPDPQK and DPEK…EKGD. Residues 90–102 show a composition bias toward low complexity; the sequence is GASAQPSASSQGP. Residues 150–159 show a composition bias toward basic and acidic residues; it reads GEAKEQKKVA. Phosphoserine occurs at positions 169, 175, and 177. A compositionally biased stretch (low complexity) spans 204-214; it reads GVPVTPGPTET. Positions 215-224 are enriched in basic and acidic residues; it reads EPAKVAEGEK. A Protein kinase domain is found at 312-567; it reads LNSKEALGGG…AAQCLAHPWL (256 aa). Residues 318–326 and Lys341 each bind ATP; that span reads LGGGKFGAV. Asp433 (proton acceptor) is an active-site residue. The residue at position 472 (Thr472) is a Phosphothreonine. The interval 601–613 is calmodulin-binding; that stretch reads IAVSAANRFKKIS.

Belongs to the protein kinase superfamily. CAMK Ser/Thr protein kinase family. May interact with centrin.

The protein localises to the cytoplasm. It carries out the reaction L-seryl-[myosin light chain] + ATP = O-phospho-L-seryl-[myosin light chain] + ADP + H(+). The enzyme catalyses L-threonyl-[myosin light chain] + ATP = O-phospho-L-threonyl-[myosin light chain] + ADP + H(+). In terms of biological role, implicated in the level of global muscle contraction and cardiac function. Phosphorylates a specific serine in the N-terminus of a myosin light chain. The chain is Myosin light chain kinase 2, skeletal/cardiac muscle (MYLK2) from Bos taurus (Bovine).